Consider the following 565-residue polypeptide: Periplasmic trehalase (565 aa).

An N-terminal signal peptide occupies residues Met1–Ala30. Residues Arg152, Trp159–Asp160, Asn196, Arg205–Gln207, Arg277–Glu279, and Gly310 contribute to the substrate site. Active-site proton donor/acceptor residues include Asp312 and Glu496. Glu511 is a substrate binding site. A disordered region spans residues Pro538–Pro565. A compositionally biased stretch (polar residues) spans Thr548 to Pro565.

This sequence belongs to the glycosyl hydrolase 37 family. Monomer.

It is found in the periplasm. The catalysed reaction is alpha,alpha-trehalose + H2O = alpha-D-glucose + beta-D-glucose. Its function is as follows. Provides the cells with the ability to utilize trehalose at high osmolarity by splitting it into glucose molecules that can subsequently be taken up by the phosphotransferase-mediated uptake system. The chain is Periplasmic trehalase from Escherichia coli (strain 55989 / EAEC).